Here is a 98-residue protein sequence, read N- to C-terminus: MPFIYINILLAFFISFIGLLMYRSHLMSSLLCLEGMMLSLYILGTLLCLNMHFTLSAMIPMILLVFAACEAAVGLALLVMVSNTYGLDHVQNLNLLQC.

3 helical membrane-spanning segments follow: residues 1-21 (MPFI…GLLM), 29-49 (SLLC…LLCL), and 61-81 (MILL…LVMV).

Belongs to the complex I subunit 4L family. As to quaternary structure, core subunit of respiratory chain NADH dehydrogenase (Complex I) which is composed of 45 different subunits.

The protein localises to the mitochondrion inner membrane. It catalyses the reaction a ubiquinone + NADH + 5 H(+)(in) = a ubiquinol + NAD(+) + 4 H(+)(out). Core subunit of the mitochondrial membrane respiratory chain NADH dehydrogenase (Complex I) which catalyzes electron transfer from NADH through the respiratory chain, using ubiquinone as an electron acceptor. Part of the enzyme membrane arm which is embedded in the lipid bilayer and involved in proton translocation. In Dugong dugon (Dugong), this protein is NADH-ubiquinone oxidoreductase chain 4L (MT-ND4L).